The chain runs to 552 residues: MHPPSLVLDTLKRIKLYIAMKLLLPNSEVPRIYWEKAQHLCGFLSMKLISRARCVASSVKQSYSFLVCKSNPLVVQLVYFVIISFAGFLALKNLKPQGKPGPKDLDLLFTSVSTLTVSSMATVEMEDLSDRQLWVLILLMLMGGEVFTSMLGLYFNNANANRNENSQRSLPSISLDIEFNSPANNGDHKITECGQSEETMSQNQVQQNKSITYNPCAVLVRIVTGYFVATVISSSVIIIIYFWIDSDARNVLKSKEINMYTFCIFTAVSSFANCGFTPLNSNMQPFRKNWVLLLLVIPQILAGNTLFSPLLRLCVWVLGKVSGKAEYAYILQHPGETGYKHLHVRRNSVYIVLSVTGLILLQVMFICSFEWNSESLEGMNWLQKLVGLLFQSVNTRQAGESILDISTLSPSTLLLFAVVMYLPSDASFLTANADNQPLTDKKTNSISRALWRNFTVNKLSCLAMFTFLACITERKSISSDPLNFNIFSIVFEIISAFGNVGYSLGYSCQKLLKPDATCKDASYGFVGRWTEEGKLIVILVMFLGRLKEFILK.

Topologically, residues Met1–Ser70 are cytoplasmic. A run of 2 helical transmembrane segments spans residues Asn71–Leu91 and Leu133–Leu153. The Cytoplasmic segment spans residues Tyr154–Arg221. Helical transmembrane passes span Ile222–Phe242 and Val291–Leu311. The Cytoplasmic segment spans residues Arg312–Ser348. 2 helical membrane-spanning segments follow: residues Val349–Phe369 and Ile402–Leu422. The Cytoplasmic segment spans residues Pro423 to Arg448. The next 2 helical transmembrane spans lie at Ala449 to Ile471 and Gly524 to Gly544. The Cytoplasmic segment spans residues Arg545–Lys552.

The protein belongs to the TrkH potassium transport family. HKT (TC 2.A.38.3) subfamily. Expressed in shoots. In roots, expressed in epidermis, exodermis, cortex, and sieve elements and companion cells of phloem. In mature leaves, expressed in large highly vacuolated cells of the adaxial epidermis, phloem and xylem.

It is found in the membrane. It catalyses the reaction Na(+)(in) = Na(+)(out). Functionally, functions as a low-affinity sodium transporter. The sequence is that of Cation transporter HKT1;1 from Oryza sativa subsp. japonica (Rice).